We begin with the raw amino-acid sequence, 183 residues long: V-type ATP synthase subunit E (183 aa).

It belongs to the V-ATPase E subunit family.

Its function is as follows. Produces ATP from ADP in the presence of a proton gradient across the membrane. This chain is V-type ATP synthase subunit E, found in Fusobacterium nucleatum subsp. nucleatum (strain ATCC 25586 / DSM 15643 / BCRC 10681 / CIP 101130 / JCM 8532 / KCTC 2640 / LMG 13131 / VPI 4355).